A 344-amino-acid chain; its full sequence is S-adenosylmethionine:tRNA ribosyltransferase-isomerase (344 aa).

The protein belongs to the QueA family. In terms of assembly, monomer.

It localises to the cytoplasm. The enzyme catalyses 7-aminomethyl-7-carbaguanosine(34) in tRNA + S-adenosyl-L-methionine = epoxyqueuosine(34) in tRNA + adenine + L-methionine + 2 H(+). Its pathway is tRNA modification; tRNA-queuosine biosynthesis. In terms of biological role, transfers and isomerizes the ribose moiety from AdoMet to the 7-aminomethyl group of 7-deazaguanine (preQ1-tRNA) to give epoxyqueuosine (oQ-tRNA). This Pediococcus pentosaceus (strain ATCC 25745 / CCUG 21536 / LMG 10740 / 183-1w) protein is S-adenosylmethionine:tRNA ribosyltransferase-isomerase.